A 228-amino-acid polypeptide reads, in one-letter code: 7-cyano-7-deazaguanine synthase (228 aa).

7 to 17 (LSGGMDSLVTT) lines the ATP pocket. Zn(2+)-binding residues include cysteine 187, cysteine 195, cysteine 198, and cysteine 201.

It belongs to the QueC family. The cofactor is Zn(2+).

It carries out the reaction 7-carboxy-7-deazaguanine + NH4(+) + ATP = 7-cyano-7-deazaguanine + ADP + phosphate + H2O + H(+). The protein operates within purine metabolism; 7-cyano-7-deazaguanine biosynthesis. Its function is as follows. Catalyzes the ATP-dependent conversion of 7-carboxy-7-deazaguanine (CDG) to 7-cyano-7-deazaguanine (preQ(0)). The sequence is that of 7-cyano-7-deazaguanine synthase from Chlorobium chlorochromatii (strain CaD3).